A 112-amino-acid polypeptide reads, in one-letter code: uncharacterized protein (112 aa).

Residues 85 to 105 (IVQLIILFAIIITNPNAIELI) form a helical membrane-spanning segment.

Belongs to the M.jannaschii MJ0023/MJ0349/MJ1072/MJ1074/MJ1107/MJECL16 family.

The protein localises to the membrane. This is an uncharacterized protein from Methanocaldococcus jannaschii (strain ATCC 43067 / DSM 2661 / JAL-1 / JCM 10045 / NBRC 100440) (Methanococcus jannaschii).